Here is a 245-residue protein sequence, read N- to C-terminus: tRNA (guanine-N(1)-)-methyltransferase (245 aa).

Residues Gly114 and 134–139 (IGDYIL) each bind S-adenosyl-L-methionine.

The protein belongs to the RNA methyltransferase TrmD family. Homodimer.

The protein localises to the cytoplasm. It carries out the reaction guanosine(37) in tRNA + S-adenosyl-L-methionine = N(1)-methylguanosine(37) in tRNA + S-adenosyl-L-homocysteine + H(+). In terms of biological role, specifically methylates guanosine-37 in various tRNAs. The chain is tRNA (guanine-N(1)-)-methyltransferase from Listeria welshimeri serovar 6b (strain ATCC 35897 / DSM 20650 / CCUG 15529 / CIP 8149 / NCTC 11857 / SLCC 5334 / V8).